The chain runs to 220 residues: Deoxyribose-phosphate aldolase (220 aa).

The active-site Proton donor/acceptor is D89. The Schiff-base intermediate with acetaldehyde role is filled by K151. K180 acts as the Proton donor/acceptor in catalysis.

The protein belongs to the DeoC/FbaB aldolase family. DeoC type 1 subfamily.

The protein resides in the cytoplasm. The enzyme catalyses 2-deoxy-D-ribose 5-phosphate = D-glyceraldehyde 3-phosphate + acetaldehyde. It participates in carbohydrate degradation; 2-deoxy-D-ribose 1-phosphate degradation; D-glyceraldehyde 3-phosphate and acetaldehyde from 2-deoxy-alpha-D-ribose 1-phosphate: step 2/2. Catalyzes a reversible aldol reaction between acetaldehyde and D-glyceraldehyde 3-phosphate to generate 2-deoxy-D-ribose 5-phosphate. The chain is Deoxyribose-phosphate aldolase from Streptococcus pneumoniae (strain Taiwan19F-14).